Consider the following 715-residue polypeptide: Fatty acid oxidation complex subunit alpha (715 aa).

Residues 1 to 194 are enoyl-CoA hydratase; sequence MHEQRAKPSA…RLGLVDDAVP (194 aa). Positions 310–715 are 3-hydroxyacyl-CoA dehydrogenase; it reads HALHRIGILG…QGERFYPQGS (406 aa).

This sequence in the N-terminal section; belongs to the enoyl-CoA hydratase/isomerase family. In the central section; belongs to the 3-hydroxyacyl-CoA dehydrogenase family. Heterotetramer of two alpha chains (FadJ) and two beta chains (FadI).

Its subcellular location is the cytoplasm. It catalyses the reaction a (3S)-3-hydroxyacyl-CoA = a (2E)-enoyl-CoA + H2O. It carries out the reaction a 4-saturated-(3S)-3-hydroxyacyl-CoA = a (3E)-enoyl-CoA + H2O. The enzyme catalyses a (3S)-3-hydroxyacyl-CoA + NAD(+) = a 3-oxoacyl-CoA + NADH + H(+). The catalysed reaction is (3S)-3-hydroxybutanoyl-CoA = (3R)-3-hydroxybutanoyl-CoA. It functions in the pathway lipid metabolism; fatty acid beta-oxidation. Catalyzes the formation of a hydroxyacyl-CoA by addition of water on enoyl-CoA. Also exhibits 3-hydroxyacyl-CoA epimerase and 3-hydroxyacyl-CoA dehydrogenase activities. This chain is Fatty acid oxidation complex subunit alpha, found in Serratia proteamaculans (strain 568).